The primary structure comprises 349 residues: GDSL esterase/lipase At2g19060 (349 aa).

Positions M1–G25 are cleaved as a signal peptide. S37 (nucleophile) is an active-site residue. An N-linked (GlcNAc...) asparagine glycan is attached at N178. Catalysis depends on residues D317 and H320.

This sequence belongs to the 'GDSL' lipolytic enzyme family.

The protein localises to the secreted. This Arabidopsis thaliana (Mouse-ear cress) protein is GDSL esterase/lipase At2g19060.